Consider the following 167-residue polypeptide: Small ribosomal subunit protein mS25 (167 aa).

Belongs to the mitochondrion-specific ribosomal protein mS25 family. Component of the mitochondrial ribosome small subunit (28S) which comprises a 12S rRNA and about 30 distinct proteins.

Its subcellular location is the mitochondrion. This is Small ribosomal subunit protein mS25 (mRpS25) from Drosophila melanogaster (Fruit fly).